The primary structure comprises 607 residues: Dolichyl-diphosphooligosaccharide--protein glycosyltransferase subunit 1 (607 aa).

An N-terminal signal peptide occupies residues 1-24; that stretch reads MEVPTARLLLLLLLGAWAPAPESA. Topologically, residues 25–434 are lumenal; that stretch reads SPEAPLLVNE…VVHYTFNKVL (410 aa). Lys187 bears the N6-acetyllysine mark. Residue Asn299 is glycosylated (N-linked (GlcNAc...) asparagine). A helical membrane pass occupies residues 435 to 455; the sequence is MLQEPLLVVAAFYILFFTVII. Residues 456–607 lie on the Cytoplasmic side of the membrane; sequence YVRLDFSITK…TKIDHILDAL (152 aa). At Lys538 the chain carries N6-acetyllysine; alternate. Residue Lys538 forms a Glycyl lysine isopeptide (Lys-Gly) (interchain with G-Cter in SUMO2); alternate linkage.

It belongs to the OST1 family. As to quaternary structure, component of the oligosaccharyltransferase (OST) complex. OST exists in two different complex forms which contain common core subunits RPN1, RPN2, OST48, OST4, DAD1 and TMEM258, either STT3A or STT3B as catalytic subunits, and form-specific accessory subunits. STT3A complex assembly occurs through the formation of 3 subcomplexes. Subcomplex 1 contains RPN1 and TMEM258, subcomplex 2 contains the STT3A-specific subunits STT3A, DC2/OSTC, and KCP2 as well as the core subunit OST4, and subcomplex 3 contains RPN2, DAD1, and OST48. The STT3A complex can form stable complexes with the Sec61 complex or with both the Sec61 and TRAP complexes. Interacts with TMEM35A/NACHO. Post-translationally, ubiquitinated by the ECS(ASB11) complex. Ufmylated by UFL1 in response to endoplasmic reticulum stress, promoting reticulophagy of endoplasmic reticulum sheets.

Its subcellular location is the endoplasmic reticulum membrane. The protein operates within protein modification; protein glycosylation. Subunit of the oligosaccharyl transferase (OST) complex that catalyzes the initial transfer of a defined glycan (Glc(3)Man(9)GlcNAc(2) in eukaryotes) from the lipid carrier dolichol-pyrophosphate to an asparagine residue within an Asn-X-Ser/Thr consensus motif in nascent polypeptide chains, the first step in protein N-glycosylation. N-glycosylation occurs cotranslationally and the complex associates with the Sec61 complex at the channel-forming translocon complex that mediates protein translocation across the endoplasmic reticulum (ER). All subunits are required for a maximal enzyme activity. The polypeptide is Dolichyl-diphosphooligosaccharide--protein glycosyltransferase subunit 1 (Canis lupus familiaris (Dog)).